Consider the following 548-residue polypeptide: Probable malate:quinone oxidoreductase (548 aa).

Residues 521–548 are disordered; it reads DKPQAADSTPKPQLKPKPVQKEVADIAL. The segment covering 539–548 has biased composition (basic and acidic residues); it reads VQKEVADIAL.

This sequence belongs to the MQO family. The cofactor is FAD.

The enzyme catalyses (S)-malate + a quinone = a quinol + oxaloacetate. It participates in carbohydrate metabolism; tricarboxylic acid cycle; oxaloacetate from (S)-malate (quinone route): step 1/1. The sequence is that of Probable malate:quinone oxidoreductase from Escherichia coli (strain ATCC 8739 / DSM 1576 / NBRC 3972 / NCIMB 8545 / WDCM 00012 / Crooks).